The following is a 306-amino-acid chain: UDP-N-acetylenolpyruvoylglucosamine reductase (306 aa).

The FAD-binding PCMH-type domain occupies 30-216 (RIGGPVPYIL…KSKLIDFSTR (187 aa)). Arg180 is a catalytic residue. Ser230 functions as the Proton donor in the catalytic mechanism. Residue Glu301 is part of the active site.

Belongs to the MurB family. It depends on FAD as a cofactor.

The protein resides in the cytoplasm. It catalyses the reaction UDP-N-acetyl-alpha-D-muramate + NADP(+) = UDP-N-acetyl-3-O-(1-carboxyvinyl)-alpha-D-glucosamine + NADPH + H(+). The protein operates within cell wall biogenesis; peptidoglycan biosynthesis. In terms of biological role, cell wall formation. The protein is UDP-N-acetylenolpyruvoylglucosamine reductase of Petrotoga mobilis (strain DSM 10674 / SJ95).